A 392-amino-acid polypeptide reads, in one-letter code: 1-deoxy-D-xylulose 5-phosphate reductoisomerase (392 aa).

Thr-14, Gly-15, Ser-16, Ile-17, Gly-40, Gln-43, and Asn-126 together coordinate NADPH. Lys-127 is a 1-deoxy-D-xylulose 5-phosphate binding site. NADPH is bound at residue Glu-128. Asp-150 lines the Mn(2+) pocket. Residues Ser-151, Glu-152, Ser-176, and His-199 each contribute to the 1-deoxy-D-xylulose 5-phosphate site. Residue Glu-152 participates in Mn(2+) binding. Gly-205 contacts NADPH. 1-deoxy-D-xylulose 5-phosphate contacts are provided by Ser-212, Asn-217, Lys-218, and Glu-221. Glu-221 is a Mn(2+) binding site.

Belongs to the DXR family. Mg(2+) is required as a cofactor. Mn(2+) serves as cofactor.

The enzyme catalyses 2-C-methyl-D-erythritol 4-phosphate + NADP(+) = 1-deoxy-D-xylulose 5-phosphate + NADPH + H(+). It participates in isoprenoid biosynthesis; isopentenyl diphosphate biosynthesis via DXP pathway; isopentenyl diphosphate from 1-deoxy-D-xylulose 5-phosphate: step 1/6. Catalyzes the NADPH-dependent rearrangement and reduction of 1-deoxy-D-xylulose-5-phosphate (DXP) to 2-C-methyl-D-erythritol 4-phosphate (MEP). The sequence is that of 1-deoxy-D-xylulose 5-phosphate reductoisomerase from Corynebacterium glutamicum (strain ATCC 13032 / DSM 20300 / JCM 1318 / BCRC 11384 / CCUG 27702 / LMG 3730 / NBRC 12168 / NCIMB 10025 / NRRL B-2784 / 534).